The sequence spans 950 residues: RNA polymerase-associated protein RapA (950 aa).

The Helicase ATP-binding domain occupies 165–333 (EVADRMAPRV…FARLRLLDPN (169 aa)). 178–185 (DEVGLGKT) contacts ATP. The DEAH box signature appears at 279–282 (DEAH). The region spanning 475 to 629 (RVEWLIDTLK…TCPTGNALQH (155 aa)) is the Helicase C-terminal domain.

The protein belongs to the SNF2/RAD54 helicase family. RapA subfamily. In terms of assembly, interacts with the RNAP. Has a higher affinity for the core RNAP than for the holoenzyme. Its ATPase activity is stimulated by binding to RNAP.

Functionally, transcription regulator that activates transcription by stimulating RNA polymerase (RNAP) recycling in case of stress conditions such as supercoiled DNA or high salt concentrations. Probably acts by releasing the RNAP, when it is trapped or immobilized on tightly supercoiled DNA. Does not activate transcription on linear DNA. Probably not involved in DNA repair. This chain is RNA polymerase-associated protein RapA, found in Pseudomonas aeruginosa (strain LESB58).